A 541-amino-acid polypeptide reads, in one-letter code: Glutamyl-tRNA(Gln) amidotransferase subunit B, mitochondrial (541 aa).

This sequence belongs to the GatB/GatE family. GatB subfamily. Subunit of the heterotrimeric GatFAB amidotransferase (AdT) complex, composed of A, B and F subunits.

It is found in the mitochondrion. The catalysed reaction is L-glutamyl-tRNA(Gln) + L-glutamine + ATP + H2O = L-glutaminyl-tRNA(Gln) + L-glutamate + ADP + phosphate + H(+). In terms of biological role, allows the formation of correctly charged Gln-tRNA(Gln) through the transamidation of misacylated Glu-tRNA(Gln) in the mitochondria. The reaction takes place in the presence of glutamine and ATP through an activated gamma-phospho-Glu-tRNA(Gln). This chain is Glutamyl-tRNA(Gln) amidotransferase subunit B, mitochondrial, found in Saccharomyces cerevisiae (strain RM11-1a) (Baker's yeast).